The following is an 87-amino-acid chain: Small ribosomal subunit protein uS17 (87 aa).

This sequence belongs to the universal ribosomal protein uS17 family. In terms of assembly, part of the 30S ribosomal subunit.

Functionally, one of the primary rRNA binding proteins, it binds specifically to the 5'-end of 16S ribosomal RNA. This chain is Small ribosomal subunit protein uS17, found in Geobacillus stearothermophilus (Bacillus stearothermophilus).